A 127-amino-acid polypeptide reads, in one-letter code: Aspartate 1-decarboxylase (127 aa).

The active-site Schiff-base intermediate with substrate; via pyruvic acid is serine 25. Position 25 is a pyruvic acid (Ser) (serine 25). Threonine 57 contributes to the substrate binding site. The active-site Proton donor is the tyrosine 58. 73–75 (GAA) provides a ligand contact to substrate.

It belongs to the PanD family. As to quaternary structure, heterooctamer of four alpha and four beta subunits. The cofactor is pyruvate. Is synthesized initially as an inactive proenzyme, which is activated by self-cleavage at a specific serine bond to produce a beta-subunit with a hydroxyl group at its C-terminus and an alpha-subunit with a pyruvoyl group at its N-terminus.

It is found in the cytoplasm. The catalysed reaction is L-aspartate + H(+) = beta-alanine + CO2. It functions in the pathway cofactor biosynthesis; (R)-pantothenate biosynthesis; beta-alanine from L-aspartate: step 1/1. Its function is as follows. Catalyzes the pyruvoyl-dependent decarboxylation of aspartate to produce beta-alanine. This chain is Aspartate 1-decarboxylase, found in Anoxybacillus flavithermus (strain DSM 21510 / WK1).